Consider the following 637-residue polypeptide: MALTVTKTSNWTIEDSEQLYRIQGWGEPYFGINAAGHVTVSPKGDRGGSLDLYELVQALQQRNISLPLLLRFSDILEDRIERLNACFARAIARYGYQGAYKGVFPIKCNQQRHIIEALVRFGQSHQFGLEAGSKPELLIALAMLNTPGALLICNGYKDRSYIETAILARRLGHTSIIVLEQPEEVAEVIAVSQALGIEPIVGVRAKLSTQGVGRWGTSAGDRAKFGLTVPEILTAVEQLRAAGMLNALQLLHFHIGSQISAISVIKDAIREAGQIYGELVRLGANMQYLDVGGGLGVDYDGSKTNFHASKNYSMQNYASDVVAGIKDACRQRGIPDPTLISESGRAIASHQSVLIFNVLGVSEVPKITPEPATAEEHLIIRNLYDTYQAIDENNYQEAYNDALQFKGEAISLFNFGYLSLPERARAESLFWACCAKILGIARQQEYVPDDLEDLEKIMASIYYINLSVFQSVPDSWAIDQLFPIMPIHRLDEEPTERGILADLTCDSDGKIDQFIDLRDVKSVLELHPFRPGEPYYLGLFLNGAYQEIMGNLHNLFGDTNAVHIRLTPKGYEIEHLVRGDTMQEVLGYVQYQGDALLEKIRCRTEAALAEEQITLAEAQHLLENYERSLRSYTYLSS.

Lys107 carries the N6-(pyridoxal phosphate)lysine modification. Substrate is bound at residue 289–299 (LDVGGGLGVDY).

It belongs to the Orn/Lys/Arg decarboxylase class-II family. SpeA subfamily. It depends on Mg(2+) as a cofactor. Pyridoxal 5'-phosphate is required as a cofactor.

It catalyses the reaction L-arginine + H(+) = agmatine + CO2. In terms of biological role, catalyzes the biosynthesis of agmatine from arginine. The chain is Biosynthetic arginine decarboxylase from Thermosynechococcus vestitus (strain NIES-2133 / IAM M-273 / BP-1).